Here is a 186-residue protein sequence, read N- to C-terminus: Photosystem I assembly protein Ycf4 (186 aa).

The next 2 helical transmembrane spans lie at 22–42 (FCWA…GTSS) and 57–77 (IIFF…LFIS).

This sequence belongs to the Ycf4 family.

Its subcellular location is the plastid. It localises to the chloroplast thylakoid membrane. Its function is as follows. Seems to be required for the assembly of the photosystem I complex. The chain is Photosystem I assembly protein Ycf4 from Vitis vinifera (Grape).